A 263-amino-acid polypeptide reads, in one-letter code: 3-deoxy-manno-octulosonate cytidylyltransferase (263 aa).

It belongs to the KdsB family.

The protein resides in the cytoplasm. It carries out the reaction 3-deoxy-alpha-D-manno-oct-2-ulosonate + CTP = CMP-3-deoxy-beta-D-manno-octulosonate + diphosphate. Its pathway is nucleotide-sugar biosynthesis; CMP-3-deoxy-D-manno-octulosonate biosynthesis; CMP-3-deoxy-D-manno-octulosonate from 3-deoxy-D-manno-octulosonate and CTP: step 1/1. The protein operates within bacterial outer membrane biogenesis; lipopolysaccharide biosynthesis. Functionally, activates KDO (a required 8-carbon sugar) for incorporation into bacterial lipopolysaccharide in Gram-negative bacteria. The chain is 3-deoxy-manno-octulosonate cytidylyltransferase from Burkholderia multivorans (strain ATCC 17616 / 249).